The primary structure comprises 708 residues: Lactotransferrin (708 aa).

Positions 1–19 (MKLLFLALLSLLALGPSLA) are cleaved as a signal peptide. 2 Transferrin-like domains span residues 25–352 (VRWC…NLKE) and 364–693 (VVWC…NLRQ). Cystine bridges form between cysteine 28–cysteine 64 and cysteine 38–cysteine 55. Aspartate 79 provides a ligand contact to Fe(3+). Arginine 92 is an active-site residue. Tyrosine 111 contributes to the Fe(3+) binding site. 5 cysteine pairs are disulfide-bonded: cysteine 134/cysteine 217, cysteine 176/cysteine 192, cysteine 179/cysteine 202, cysteine 189/cysteine 200, and cysteine 250/cysteine 264. Hydrogencarbonate is bound at residue threonine 136. An N-linked (GlcNAc...) asparagine glycan is attached at asparagine 139. Hydrogencarbonate is bound by residues arginine 140, alanine 142, and glycine 143. Tyrosine 211 serves as a coordination point for Fe(3+). Histidine 272 contacts Fe(3+). Serine 278 functions as the Nucleophile in the catalytic mechanism. Intrachain disulfides connect cysteine 367-cysteine 399 and cysteine 377-cysteine 390. Asparagine 385 is a glycosylation site (N-linked (GlcNAc...) asparagine). Aspartate 414 and aspartate 452 together coordinate Fe(3+). 4 disulfides stabilise this stretch: cysteine 476-cysteine 551, cysteine 510-cysteine 524, cysteine 521-cysteine 534, and cysteine 592-cysteine 606. Residues threonine 478, arginine 482, alanine 484, and glycine 485 each coordinate hydrogencarbonate. N-linked (GlcNAc...) asparagine glycosylation occurs at asparagine 495. Tyrosine 545 is a Fe(3+) binding site. Fe(3+) is bound at residue histidine 614.

It belongs to the transferrin family. As to quaternary structure, monomer. Found in a complex with LTF, CLU, EPPIN and SEMG1. Interacts with prey activated coagulation factor X; the interaction inhibits coagulation factor X catalytic activity. Found in a complex with MPO and LTF; interacts directly with CP, allows Fe(3+) incorporation into LTF and activation of CP ferroxidase activity. In terms of processing, N-glycosylated. Glycosylation is important for draculin anticoagulant activity. Probably also O-glycosylated. In terms of tissue distribution, expressed in the submaxillary gland and secreted in the saliva (at protein level).

It is found in the secreted. Transferrins are iron binding transport proteins which can bind two Fe(3+) ions in association with the binding of an anion, usually bicarbonate. Functionally, major iron-binding and multifunctional protein found in exocrine fluids such as breast milk and mucosal secretions. Has antimicrobial activity. Antimicrobial properties may include bacteriostasis, which is related to its ability to sequester free iron and thus inhibit microbial growth, as well as direct bactericidal properties leading to the release of lipopolysaccharides from the bacterial outer membrane. May have anabolic, differentiating and anti-apoptotic effects on osteoblasts and may also inhibit osteoclastogenesis, possibly playing a role in the regulation of bone growth. May interfere with the lipopolysaccharide (LPS)-stimulated TLR4 signaling. Its function is as follows. The lactotransferrin transferrin-like domain 1 functions as a serine protease of the peptidase S60 family that cuts arginine rich regions. This function contributes to the antimicrobial activity. Shows a preferential cleavage at -Arg-Ser-Arg-Arg-|- and -Arg-Arg-Ser-Arg-|-, and of Z-Phe-Arg-|-aminomethylcoumarin sites. In terms of biological role, acts as an anticoagulant of the blood coagulation cascade of the bat's prey by inhibiting coagulation factor IX and activated coagulation factor X. This Desmodus rotundus (Vampire bat) protein is Lactotransferrin.